Consider the following 296-residue polypeptide: Polyadenylate-binding protein 2 (296 aa).

A disordered region spans residues 1–102 (MAAVSSAASL…EEEPGELTGD (102 aa)). 2 stretches are compositionally biased toward gly residues: residues 19 to 31 (LRGGAGPSGGGQD) and 71 to 82 (GRGGSGGGGAGG). Positions 84–97 (EELEDEELEEEEPG) are enriched in acidic residues. Residues 107–141 (DPELEAIKARVREMEEEAEKLKELQNEVEKQMNMS) adopt a coiled-coil conformation. A necessary for homooligomerization region spans residues 146-296 (NAGPVIMSIE…ARVTSWYTPY (151 aa)). Residues 163-240 (RSIYVGNVDY…RQIKVVPKRT (78 aa)) form the RRM domain.

In terms of assembly, monomer and homooligomer. Binds RNA as a monomer and oligomerizes when bound to poly(A).

It localises to the nucleus. The protein resides in the cytoplasm. Functionally, involved in the 3'-end formation of mRNA precursors (pre-mRNA) by the addition of a poly(A) tail of 200-250 nt to the upstream cleavage product. Stimulates poly(A) polymerase (PAPOLA) conferring processivity on the poly(A) tail elongation reaction and also controls the poly(A) tail length. Increases the affinity of poly(A) polymerase for RNA. Binds to poly(A) and to poly(G) with high affinity. May protect the poly(A) tail from degradation. The polypeptide is Polyadenylate-binding protein 2 (Xenopus tropicalis (Western clawed frog)).